Reading from the N-terminus, the 149-residue chain is MNQSLTLAFLIAAGIGLVVQNTLMVRITQTSSTILIAMLLNSLVGIVLFVSILWFKQGMAGFGELVSSVRWWTLIPGLLGSFFVFASISGYQNVGAATTIAVLVASQLIGGLMLDIFRSHGVPLRALFGPICGAILLVVGAWLVARRSF.

At 1 to 4 the chain is on the periplasmic side; that stretch reads MNQS. The helical transmembrane segment at 5-25 threads the bilayer; the sequence is LTLAFLIAAGIGLVVQNTLMV. Residues 26–33 lie on the Cytoplasmic side of the membrane; sequence RITQTSST. The helical transmembrane segment at 34 to 54 threads the bilayer; sequence ILIAMLLNSLVGIVLFVSILW. Over 55–70 the chain is Periplasmic; sequence FKQGMAGFGELVSSVR. Residues 71-91 form a helical membrane-spanning segment; sequence WWTLIPGLLGSFFVFASISGY. Residues 92–93 lie on the Cytoplasmic side of the membrane; it reads QN. The helical transmembrane segment at 94–114 threads the bilayer; that stretch reads VGAATTIAVLVASQLIGGLML. Residues 115-123 are Periplasmic-facing; it reads DIFRSHGVP. Residues 124 to 144 traverse the membrane as a helical segment; that stretch reads LRALFGPICGAILLVVGAWLV. Topologically, residues 145–149 are cytoplasmic; sequence ARRSF.

The protein resides in the cell inner membrane. The chain is Inner membrane protein YdcZ (ydcZ) from Escherichia coli (strain K12).